A 107-amino-acid chain; its full sequence is U1-lycotoxin-Ls1b (107 aa).

An N-terminal signal peptide occupies residues 1-20 (MMKVLVVVALLVTLISYSSS). A propeptide spanning residues 21–41 (EGIDDLEADELLSLMADEQTR) is cleaved from the precursor. Intrachain disulfides connect cysteine 44–cysteine 59, cysteine 51–cysteine 68, cysteine 58–cysteine 86, and cysteine 70–cysteine 84.

This sequence belongs to the neurotoxin 19 (CSTX) family. 04 (U1-Lctx) subfamily. Expressed by the venom gland.

The protein resides in the secreted. In Lycosa singoriensis (Wolf spider), this protein is U1-lycotoxin-Ls1b.